A 359-amino-acid chain; its full sequence is F-box protein At1g10895 (359 aa).

The region spanning 2–48 is the F-box domain; sequence TTMSDLDEIMVAEILCRTPMTCLKTVRSVCKKWNALSKKWFFFGKAK.

The protein is F-box protein At1g10895 of Arabidopsis thaliana (Mouse-ear cress).